The primary structure comprises 457 residues: 4-hydroxybenzoate transporter PcaK (457 aa).

At 1-34 the chain is on the cytoplasmic side; sequence MPKEANMASQDYATQRSSLDAQALINDAPLSRYQ. The helical transmembrane segment at 35–55 threads the bilayer; it reads WLIAIVCFLIVFVDGIDTAAM. At 56 to 72 the chain is on the periplasmic side; sequence GFIAPALAQDWGVDRSQ. The helical transmembrane segment at 73-93 threads the bilayer; that stretch reads LGPVMSAALGGMIIGALVSGP. The Cytoplasmic portion of the chain corresponds to 94–101; the sequence is TADRFGRK. The chain crosses the membrane as a helical span at residues 102–122; the sequence is IVLSMSMLVFGGFTLACAYST. Topologically, residues 123-128 are periplasmic; the sequence is NLDSLV. Residues 129–149 form a helical membrane-spanning segment; it reads IFRFLTGIGLGAAMPNATTLF. The Cytoplasmic portion of the chain corresponds to 150 to 168; the sequence is SEYCPARIRSLLVTCMFCG. The chain crosses the membrane as a helical span at residues 169 to 189; the sequence is YNLGMAIGGFISSWLIPAFGW. At 190–191 the chain is on the periplasmic side; sequence HS. A helical transmembrane segment spans residues 192-212; sequence LFLLGGWAPLILMLLVIFFLP. At 213-274 the chain is on the cytoplasmic side; that stretch reads ESYRFLIVKG…LFSAKYVKGT (62 aa). A helical transmembrane segment spans residues 275–295; it reads VLLWVTYFMGLVMIYLLTSWL. The Periplasmic segment spans residues 296 to 310; it reads PTLMRETGASLERAA. The chain crosses the membrane as a helical span at residues 311–331; it reads FLGGLFQFGGVLSALFIGWAM. Over 332-338 the chain is Cytoplasmic; the sequence is DRFNPNR. The helical transmembrane segment at 339-359 threads the bilayer; the sequence is IIAGFYLAAGIFAVIVGQSLS. Residues 360–363 lie on the Periplasmic side of the membrane; that stretch reads NPTL. Residues 364–384 traverse the membrane as a helical segment; that stretch reads LALFILCAGIAVNGAQSSMPV. Residues 385-400 are Cytoplasmic-facing; sequence LSARFYPTQCRATGVA. Residues 401–421 traverse the membrane as a helical segment; that stretch reads WMSGIGRFGAVFGAWIGAVLL. The Periplasmic portion of the chain corresponds to 422–426; it reads GNNWS. Residues 427–447 form a helical membrane-spanning segment; the sequence is FTMILSMLIIPAAAAAIAIFV. At 448–457 the chain is on the cytoplasmic side; that stretch reads KSLVAHTDAT.

This sequence belongs to the major facilitator superfamily. Aromatic acid:H(+) symporter (AAHS) (TC 2.A.1.15) family. As to quaternary structure, homotrimer.

It is found in the cell inner membrane. Uptake of 4-hydroxybenzoate (4-HB). Can also transport a variety of aromatic acids with hydroxyl substitutions at the 2-, 3- and 4-positions, such as salicylate, 2,4-dihydroxybenzoate, protocatechuate, 3-hydroxybenzoate, vanillate and gentisate. In Acinetobacter baylyi (strain ATCC 33305 / BD413 / ADP1), this protein is 4-hydroxybenzoate transporter PcaK.